Here is a 79-residue protein sequence, read N- to C-terminus: Mycoredoxin 1 (79 aa).

Positions 1-79 (MSNVTIYATD…EVIAKIEALA (79 aa)) constitute a Glutaredoxin domain.

Belongs to the glutaredoxin family.

The protein localises to the cytoplasm. The catalysed reaction is [mycoredoxin]-L-cysteine + arseno-mycothiol + H(+) = [mycoredoxin]-S-mycothiol-L-cysteine + arsenite. Functionally, involved in defense against toxic arsenate. Involved in the mycothiol/myoredoxin redox pathway which uses a mycothioltransferase mechanism; functions as a monothiol mixed disulfide reductase and is recycled by a second mycothiol forming mycothione which in turn is reduced in a NADPH-dependent manner. This Corynebacterium glutamicum (strain ATCC 13032 / K051) protein is Mycoredoxin 1 (mrx1).